Here is a 131-residue protein sequence, read N- to C-terminus: Profilin-1 (131 aa).

A disulfide bridge links C13 with C115. The Involved in PIP2 interaction signature appears at 81–97 (RVIRGKKGAGGITIKKT). T111 is modified (phosphothreonine).

The protein belongs to the profilin family. Occurs in many kinds of cells as a complex with monomeric actin in a 1:1 ratio.

It is found in the cytoplasm. Its subcellular location is the cytoskeleton. Binds to actin and affects the structure of the cytoskeleton. At high concentrations, profilin prevents the polymerization of actin, whereas it enhances it at low concentrations. By binding to PIP2, it inhibits the formation of IP3 and DG. The chain is Profilin-1 (PRO1) from Phleum pratense (Common timothy).